A 610-amino-acid polypeptide reads, in one-letter code: Aspartate--tRNA(Asp/Asn) ligase (610 aa).

Glu177 is an L-aspartate binding site. An aspartate region spans residues 201-204 (QLFK). Arg223 is an L-aspartate binding site. ATP contacts are provided by residues 223-225 (RDE) and Gln232. His461 contacts L-aspartate. An ATP-binding site is contributed by Glu499. Residue Arg506 participates in L-aspartate binding. ATP is bound at residue 551–554 (GVDR).

This sequence belongs to the class-II aminoacyl-tRNA synthetase family. Type 1 subfamily. As to quaternary structure, homodimer.

It is found in the cytoplasm. It catalyses the reaction tRNA(Asx) + L-aspartate + ATP = L-aspartyl-tRNA(Asx) + AMP + diphosphate. Aspartyl-tRNA synthetase with relaxed tRNA specificity since it is able to aspartylate not only its cognate tRNA(Asp) but also tRNA(Asn). Reaction proceeds in two steps: L-aspartate is first activated by ATP to form Asp-AMP and then transferred to the acceptor end of tRNA(Asp/Asn). This chain is Aspartate--tRNA(Asp/Asn) ligase, found in Parasynechococcus marenigrum (strain WH8102).